The sequence spans 417 residues: NADH-quinone oxidoreductase subunit D 1 (417 aa).

It belongs to the complex I 49 kDa subunit family. In terms of assembly, NDH-1 is composed of 14 different subunits. Subunits NuoB, C, D, E, F, and G constitute the peripheral sector of the complex.

The protein resides in the cell membrane. The catalysed reaction is a quinone + NADH + 5 H(+)(in) = a quinol + NAD(+) + 4 H(+)(out). In terms of biological role, NDH-1 shuttles electrons from NADH, via FMN and iron-sulfur (Fe-S) centers, to quinones in the respiratory chain. The immediate electron acceptor for the enzyme in this species is believed to be ubiquinone. Couples the redox reaction to proton translocation (for every two electrons transferred, four hydrogen ions are translocated across the cytoplasmic membrane), and thus conserves the redox energy in a proton gradient. The chain is NADH-quinone oxidoreductase subunit D 1 from Roseiflexus castenholzii (strain DSM 13941 / HLO8).